A 328-amino-acid polypeptide reads, in one-letter code: Malate dehydrogenase (328 aa).

11 to 17 (GAAGQIG) contributes to the NAD(+) binding site. Substrate-binding residues include Arg-94 and Arg-100. NAD(+) contacts are provided by residues Asn-107, Gln-114, and 131 to 133 (VGN). Positions 133 and 164 each coordinate substrate. His-189 (proton acceptor) is an active-site residue.

This sequence belongs to the LDH/MDH superfamily. MDH type 2 family.

The enzyme catalyses (S)-malate + NAD(+) = oxaloacetate + NADH + H(+). In terms of biological role, catalyzes the reversible oxidation of malate to oxaloacetate. The protein is Malate dehydrogenase of Xylella fastidiosa (strain M12).